Consider the following 313-residue polypeptide: Ribosomal RNA small subunit methyltransferase H (313 aa).

Residues 35 to 37 (GGH), D55, F80, D102, and Q109 contribute to the S-adenosyl-L-methionine site.

Belongs to the methyltransferase superfamily. RsmH family.

The protein resides in the cytoplasm. It catalyses the reaction cytidine(1402) in 16S rRNA + S-adenosyl-L-methionine = N(4)-methylcytidine(1402) in 16S rRNA + S-adenosyl-L-homocysteine + H(+). Its function is as follows. Specifically methylates the N4 position of cytidine in position 1402 (C1402) of 16S rRNA. In Shewanella woodyi (strain ATCC 51908 / MS32), this protein is Ribosomal RNA small subunit methyltransferase H.